We begin with the raw amino-acid sequence, 182 residues long: uncharacterized protein (182 aa).

Residues 151-172 (RGPGKPFADEKPCPRERPPADQ) are disordered. Basic and acidic residues predominate over residues 157-169 (FADEKPCPRERPP).

This is an uncharacterized protein from Mycobacterium tuberculosis (strain CDC 1551 / Oshkosh).